Consider the following 612-residue polypeptide: Dihydroxy-acid dehydratase (612 aa).

Asp-81 serves as a coordination point for Mg(2+). A [2Fe-2S] cluster-binding site is contributed by Cys-122. Mg(2+) contacts are provided by Asp-123 and Lys-124. Lys-124 bears the N6-carboxylysine mark. Residue Cys-193 participates in [2Fe-2S] cluster binding. Residue Glu-489 coordinates Mg(2+). Residue Ser-515 is the Proton acceptor of the active site.

This sequence belongs to the IlvD/Edd family. As to quaternary structure, homodimer. The cofactor is [2Fe-2S] cluster. It depends on Mg(2+) as a cofactor.

The catalysed reaction is (2R)-2,3-dihydroxy-3-methylbutanoate = 3-methyl-2-oxobutanoate + H2O. It carries out the reaction (2R,3R)-2,3-dihydroxy-3-methylpentanoate = (S)-3-methyl-2-oxopentanoate + H2O. The protein operates within amino-acid biosynthesis; L-isoleucine biosynthesis; L-isoleucine from 2-oxobutanoate: step 3/4. It functions in the pathway amino-acid biosynthesis; L-valine biosynthesis; L-valine from pyruvate: step 3/4. Functions in the biosynthesis of branched-chain amino acids. Catalyzes the dehydration of (2R,3R)-2,3-dihydroxy-3-methylpentanoate (2,3-dihydroxy-3-methylvalerate) into 2-oxo-3-methylpentanoate (2-oxo-3-methylvalerate) and of (2R)-2,3-dihydroxy-3-methylbutanoate (2,3-dihydroxyisovalerate) into 2-oxo-3-methylbutanoate (2-oxoisovalerate), the penultimate precursor to L-isoleucine and L-valine, respectively. This Xanthomonas campestris pv. campestris (strain B100) protein is Dihydroxy-acid dehydratase.